The chain runs to 720 residues: Translation initiation factor IF-2 (720 aa).

The tract at residues 48-138 (KKFKASQAKD…NEVEETKEMP (91 aa)) is disordered. 2 stretches are compositionally biased toward low complexity: residues 60–75 (KQNTQNNHQKSNNKQN) and 99–113 (KGKQQNKNNKTNKNQ). Positions 114–123 (KNNKNKKNNK) are enriched in basic residues. The 170-residue stretch at 222 to 391 (ERPAVVTIMG…GLVAEVQELK (170 aa)) folds into the tr-type G domain. The G1 stretch occupies residues 231-238 (GHVDHGKT). Position 231–238 (231–238 (GHVDHGKT)) interacts with GTP. The G2 stretch occupies residues 256–260 (GITQH). The segment at 277-280 (DTPG) is G3. GTP is bound by residues 277–281 (DTPGH) and 331–334 (NKID). Residues 331-334 (NKID) are G4. The G5 stretch occupies residues 367–369 (SAL).

Belongs to the TRAFAC class translation factor GTPase superfamily. Classic translation factor GTPase family. IF-2 subfamily.

Its subcellular location is the cytoplasm. One of the essential components for the initiation of protein synthesis. Protects formylmethionyl-tRNA from spontaneous hydrolysis and promotes its binding to the 30S ribosomal subunits. Also involved in the hydrolysis of GTP during the formation of the 70S ribosomal complex. This Staphylococcus epidermidis (strain ATCC 35984 / DSM 28319 / BCRC 17069 / CCUG 31568 / BM 3577 / RP62A) protein is Translation initiation factor IF-2.